Reading from the N-terminus, the 695-residue chain is MENVEARYVDLDKLRNIGIMAHIDAGKTTTTERILYYTGRKHFLGDVDEGNTTTDWMPQEKERGITIQSAATTCFWKGYRINIIDTPGHVDFTAEVERALRVLDGAIAVFDATAGVEPQSETVWRQADKYNVPRIAFMNKMDKVGADFYMAVETLVTKLKANPIPVQMPIGSEKDFQGVIDLIKMKAIYWVSEDGSVYEEREIPEELREEAEMRREEMLEKVAELDEEILEKYLEGEEISEEEIKRILRKATIENRAVPVLCGAAKANKGIQPLLDAVIDYLPSPLDLPPVKGWRVSDGEIVYRKPDENEPFTALVFKVQVDPYIGKLVYFRVYSGRLEKGSYVYNSTKGQRERISRIVFMHADKREEVDYVRPGDIAAGVGLKVSQTGDTLCDEKEPVILEKIDFPEPVISLAIEPATKADEEKLVKALLALSEEDPTLQVRVDKETGETIISGMGELHLEIVVDRLKREFGVNVRVGQPQVAYRETIKRPAEAEGKYIRQTGGRGQYGHVILRIEPIPEEEGKNFEFIDKTVGGVIPKEFMPAIEAGIKEAMMSGPLAGYPVVRVRAVVLDGSYHEVDSSEMAFKIAASMAFKEAMKKAQPVLLEPIMKLEITTPEEYMGNIISDLNSRRAKIESLETRGHLKIVVAKIPLSETFGYATVLRSLSQGRASYIMQFSHYQEVPEKIAEKIIKVV.

Residues 12–286 enclose the tr-type G domain; that stretch reads DKLRNIGIMA…AVIDYLPSPL (275 aa). GTP contacts are provided by residues 21–28, 85–89, and 139–142; these read AHIDAGKT, DTPGH, and NKMD.

The protein belongs to the TRAFAC class translation factor GTPase superfamily. Classic translation factor GTPase family. EF-G/EF-2 subfamily.

The protein localises to the cytoplasm. Its function is as follows. Catalyzes the GTP-dependent ribosomal translocation step during translation elongation. During this step, the ribosome changes from the pre-translocational (PRE) to the post-translocational (POST) state as the newly formed A-site-bound peptidyl-tRNA and P-site-bound deacylated tRNA move to the P and E sites, respectively. Catalyzes the coordinated movement of the two tRNA molecules, the mRNA and conformational changes in the ribosome. This is Elongation factor G from Thermotoga petrophila (strain ATCC BAA-488 / DSM 13995 / JCM 10881 / RKU-1).